Reading from the N-terminus, the 148-residue chain is Probable DNA-directed RNA polymerases I, II, and III subunit RPABC3 (148 aa).

A non-specific ssDNA binding region spans residues 16–40; that stretch reads DPDGKKFDRVSRYFCDAESFKMELI.

Belongs to the eukaryotic RPB8 RNA polymerase subunit family. In terms of assembly, component of the RNA polymerase I (Pol I), RNA polymerase II (Pol II) and RNA polymerase III (Pol III) complexes consisting of at least 13, 12 and 17 subunits, respectively. Directly interacts with POLR2A.

It localises to the nucleus. In terms of biological role, DNA-dependent RNA polymerase catalyzes the transcription of DNA into RNA using the four ribonucleoside triphosphates as substrates. Common component of RNA polymerases I, II and III which synthesize ribosomal RNA precursors, mRNA precursors and many functional non-coding RNAs, and small RNAs, such as 5S rRNA and tRNAs, respectively. The sequence is that of Probable DNA-directed RNA polymerases I, II, and III subunit RPABC3 (rpb-8) from Caenorhabditis elegans.